The primary structure comprises 780 residues: Exocyst complex component 3-like protein (780 aa).

It belongs to the SEC6 family.

It is found in the cytoplasmic vesicle. The protein resides in the secretory vesicle. Its function is as follows. As part of the exocyst, may play a role in regulated exocytosis. In Danio rerio (Zebrafish), this protein is Exocyst complex component 3-like protein (exoc3l1).